We begin with the raw amino-acid sequence, 942 residues long: DNA mismatch repair protein MSH2 (942 aa).

Position 667–674 (667–674 (GPNMGGKS)) interacts with ATP.

This sequence belongs to the DNA mismatch repair MutS family. In terms of assembly, heterodimer of MSH2 and MSH6 (GTBP).

Its subcellular location is the nucleus. Its function is as follows. Involved in postreplication mismatch repair. Binds specifically to DNA containing mismatched nucleotides thus providing a target for the excision repair processes characteristic of postreplication mismatch repair. The polypeptide is DNA mismatch repair protein MSH2 (MUS1) (Zea mays (Maize)).